Consider the following 557-residue polypeptide: MAVQTDIEIARAARKKPIQEIGAGLGIPAEALIPYGHDKAKVGQGFIRGLEGRPDGKLILVTAINPTPAGEGKTTTTVGLGDGLNRIGKKAVICIREASLGPNFGMKGGAAGGGRAQVVPMEDMNLHFTGDFHAITAAHNLLAAMIDNHIYWGNALELDARRITWRRVMDMNDRALRDTVVNLGGVANGFPRQTGFDITVASEVMAILCLADDLEDLERRLGRIVVGYRRDKSPVYCRDLKAAGAMAVLLKDAMQPNLVQTIENNPAFVHGGPFANIAHGCNSVIATRTALKLADYVVTEAGFGADLGAEKFFDIKCRLAGLKPSAAVVVATVRALKMNGGVAREDLGREDVAALRRGCANLGRHIANVKGFGVPVVVAINHFTTDTEAEIEAVRAYAAGQGAEAFLCRHWAEGSAGIEDLAQKVVELAEAPSMFAPLYPDDMPLFEKMETVARRIYHAHDVIADHVIRDQLRTWEEAGYGALPVCMAKTQYSFTTDAAIRGAPEGHSIPIREVRLAAGAGFVVAICGEIRTMPGLPSQPAAELIHLDEEGRIEGLF.

Thr67–Thr74 is a binding site for ATP.

The protein belongs to the formate--tetrahydrofolate ligase family.

The enzyme catalyses (6S)-5,6,7,8-tetrahydrofolate + formate + ATP = (6R)-10-formyltetrahydrofolate + ADP + phosphate. The protein operates within one-carbon metabolism; tetrahydrofolate interconversion. The protein is Formate--tetrahydrofolate ligase of Cereibacter sphaeroides (strain KD131 / KCTC 12085) (Rhodobacter sphaeroides).